The sequence spans 209 residues: Ribosomal RNA large subunit methyltransferase E (209 aa).

Residues Gly63, Trp65, Asp83, Asp99, and Asp124 each contribute to the S-adenosyl-L-methionine site. Residue Lys164 is the Proton acceptor of the active site.

The protein belongs to the class I-like SAM-binding methyltransferase superfamily. RNA methyltransferase RlmE family.

It is found in the cytoplasm. It catalyses the reaction uridine(2552) in 23S rRNA + S-adenosyl-L-methionine = 2'-O-methyluridine(2552) in 23S rRNA + S-adenosyl-L-homocysteine + H(+). Specifically methylates the uridine in position 2552 of 23S rRNA at the 2'-O position of the ribose in the fully assembled 50S ribosomal subunit. The chain is Ribosomal RNA large subunit methyltransferase E from Yersinia enterocolitica serotype O:8 / biotype 1B (strain NCTC 13174 / 8081).